Consider the following 314-residue polypeptide: MSNSASSFADVSSGCTAGTPVPADSPIRDNIADAVRRVRETTPLAQSFTNFVTINLVANAQLAAGGTAAMSFLPDDVIETAKIAGANYINVGTLLPFYKDALPEIAQRLNYLDKPWVLDPVAAGIGHTRTAILQTFKAAPPTMIRANASEVIALANMWGLNTETVGDASEHRPAGVESVDDVESATGAAVALAQYLTEQHAKHSSHDASTRCAVAVSGIADLVTDGETVYRLPGGSAMMTKITGAGCSLGGVAATYLAVSDPLTAALSASLLYNRAAEIADTTSHGPGSFQVAFLDALWNVTAEQVAESEILVQ.

A compositionally biased stretch (low complexity) spans 1–13 (MSNSASSFADVSS). Residues 1–24 (MSNSASSFADVSSGCTAGTPVPAD) are disordered. Met-70 is a binding site for substrate. Arg-145 and Ser-217 together coordinate ATP. Residue Gly-244 participates in substrate binding.

This sequence belongs to the Thz kinase family. Requires Mg(2+) as cofactor.

The enzyme catalyses 5-(2-hydroxyethyl)-4-methylthiazole + ATP = 4-methyl-5-(2-phosphooxyethyl)-thiazole + ADP + H(+). It functions in the pathway cofactor biosynthesis; thiamine diphosphate biosynthesis; 4-methyl-5-(2-phosphoethyl)-thiazole from 5-(2-hydroxyethyl)-4-methylthiazole: step 1/1. Functionally, catalyzes the phosphorylation of the hydroxyl group of 4-methyl-5-beta-hydroxyethylthiazole (THZ). This Bifidobacterium longum subsp. infantis (strain ATCC 15697 / DSM 20088 / JCM 1222 / NCTC 11817 / S12) protein is Hydroxyethylthiazole kinase.